The chain runs to 435 residues: Cytochrome c biogenesis protein CcsB (435 aa).

A run of 3 helical transmembrane segments spans residues 11–31 (LRVA…GTAL), 69–89 (SDWF…CSWR), and 159–179 (VGPL…VWGV).

Belongs to the Ccs1/CcsB family. In terms of assembly, may interact with CcsA.

The protein localises to the plastid. The protein resides in the organellar chromatophore thylakoid membrane. Its function is as follows. Required during biogenesis of c-type cytochromes (cytochrome c6 and cytochrome f) at the step of heme attachment. This Paulinella chromatophora protein is Cytochrome c biogenesis protein CcsB.